Consider the following 228-residue polypeptide: Ankyrin repeat domain-containing protein 46 (228 aa).

4 ANK repeats span residues 11–40, 44–74, 77–103, and 107–138; these read QTNV…DPNI, RGRT…PLAT, QGNT…KIDI, and QGAT…EVKG. The helical transmembrane segment at 195–215 threads the bilayer; it reads VLLLILVIALLSLGIAYYVSG.

Its subcellular location is the membrane. The protein is Ankyrin repeat domain-containing protein 46 (Ankrd46) of Mus musculus (Mouse).